The primary structure comprises 703 residues: MTTTNWSLKVDRGRQTWEYSQEKKEATDVDIHLLRLKEPGTHCPEGCDLNRAKTPQQAIKKAFQYFSKVQTEDGHWAGDYGGPMFLLPGLVITCYVTGYQLPESTQREIIRYLFNRQNPVDGGWGLHIEAHSDIFGTTLQYVSLRLLGVPADHPSVVKARTFLLQNGGATGIPSWGKFWLATLNAYDWNGLNPIPIEFWLLPYNLPIAPGRWWCHCRMVYLPMSYIYAKKTTGPLTDLVKDLRREIYCQEYEKINWSEQRNNISKLDMYYEHTSLLNVINGSLNAYEKVHSKWLRDKAIDYTFDHIRYEDEQTKYIDIGPVNKTVNMLCVWDREGKSPAFYKHADRLKDYLWLSFDGMKMQGYNGSQLWDTAFTIQAFMESGIANQFQDCMKLAGHYLDISQVPEDARDMKHYHRHYSKGAWPFSTVDHGWPISDCTAEGIKSALALRSLPFIEPISLDRIADGINVLLTLQNGDGGWASYENTRGPKWLEKFNPSEVFQNIMIDYSYVECSAACIQAMSAFRKHAPNHPRIKEINRSIARGVKFIKSIQRQDGSWLGSWGICFTYGTWFGIEGLVASGEPLTSPSIVKACKFLASKQRADGGWGESFKSNVTKEYVQHETSQVVNTGWALLSLMSAKYPDRECIERGIKFLIQRQYPNGDFPQESIIGVFNFNCMISYSNYKNIFPLWALSRYNQLYLKSKI.

PFTB repeat units lie at residues 59–103 (IKKA…QLPE) and 106–148 (QREI…RLLG). Residue D435 is the Proton donor of the active site. PFTB repeat units follow at residues 461–503 (IADG…QNIM), 539–579 (IARG…VASG), 587–628 (IVKA…VNTG), and 645–686 (IERG…KNIF).

The protein belongs to the terpene cyclase/mutase family.

It catalyses the reaction (S)-2,3-epoxysqualene = cycloartenol. Its function is as follows. Converts oxidosqualene to cycloartenol (in vitro). This chain is Cycloartenol synthase (cas1), found in Dictyostelium discoideum (Social amoeba).